Consider the following 400-residue polypeptide: Peptidase M20 domain-containing protein C757.05c (400 aa).

The signal sequence occupies residues 1–25 (MTMKISVWSLLIVIGYHLWMSPVLA). N-linked (GlcNAc...) asparagine glycosylation is present at Asn80. Asp152 contacts Zn(2+). Glu186 (proton acceptor) is an active-site residue. Glu187 lines the Zn(2+) pocket.

The protein belongs to the peptidase M20A family. Zn(2+) is required as a cofactor.

Its subcellular location is the secreted. The sequence is that of Peptidase M20 domain-containing protein C757.05c from Schizosaccharomyces pombe (strain 972 / ATCC 24843) (Fission yeast).